Here is a 164-residue protein sequence, read N- to C-terminus: HTH-type transcriptional regulator IscR (164 aa).

An HTH rrf2-type domain is found at 2-131; the sequence is RLTSKGRYAV…NNITLAELVN (130 aa). The segment at residues 28-51 is a DNA-binding region (H-T-H motif); that stretch reads LADISERQGISLSYLEQLFSRLRK. [2Fe-2S] cluster-binding residues include Cys92, Cys98, and Cys104. Residues 143–164 form a disordered region; it reads NNDTRRTANGRPQETINVNLRA. A compositionally biased stretch (polar residues) spans 152-164; it reads GRPQETINVNLRA.

Requires [2Fe-2S] cluster as cofactor.

Its function is as follows. Regulates the transcription of several operons and genes involved in the biogenesis of Fe-S clusters and Fe-S-containing proteins. This Yersinia enterocolitica serotype O:8 / biotype 1B (strain NCTC 13174 / 8081) protein is HTH-type transcriptional regulator IscR.